The following is a 128-amino-acid chain: Transcription antitermination protein NusB (128 aa).

This sequence belongs to the NusB family.

In terms of biological role, involved in transcription antitermination. Required for transcription of ribosomal RNA (rRNA) genes. Binds specifically to the boxA antiterminator sequence of the ribosomal RNA (rrn) operons. This is Transcription antitermination protein NusB from Listeria innocua serovar 6a (strain ATCC BAA-680 / CLIP 11262).